A 588-amino-acid polypeptide reads, in one-letter code: Aspartate--tRNA ligase (588 aa).

Glutamate 177 lines the L-aspartate pocket. An aspartate region spans residues 201 to 204; that stretch reads QIFK. Arginine 223 contacts L-aspartate. Residues 223 to 225 and glutamine 232 contribute to the ATP site; that span reads RDE. Histidine 451 contacts L-aspartate. Glutamate 485 lines the ATP pocket. Residue arginine 492 coordinates L-aspartate. An ATP-binding site is contributed by 537–540; it reads GLDR.

It belongs to the class-II aminoacyl-tRNA synthetase family. Type 1 subfamily. Homodimer.

The protein localises to the cytoplasm. The enzyme catalyses tRNA(Asp) + L-aspartate + ATP = L-aspartyl-tRNA(Asp) + AMP + diphosphate. Its function is as follows. Catalyzes the attachment of L-aspartate to tRNA(Asp) in a two-step reaction: L-aspartate is first activated by ATP to form Asp-AMP and then transferred to the acceptor end of tRNA(Asp). This is Aspartate--tRNA ligase from Staphylococcus saprophyticus subsp. saprophyticus (strain ATCC 15305 / DSM 20229 / NCIMB 8711 / NCTC 7292 / S-41).